Here is a 113-residue protein sequence, read N- to C-terminus: Large ribosomal subunit protein bL17 (113 aa).

It belongs to the bacterial ribosomal protein bL17 family. As to quaternary structure, part of the 50S ribosomal subunit. Contacts protein L32.

This Caldicellulosiruptor bescii (strain ATCC BAA-1888 / DSM 6725 / KCTC 15123 / Z-1320) (Anaerocellum thermophilum) protein is Large ribosomal subunit protein bL17.